The primary structure comprises 265 residues: Hydroxyethylthiazole kinase (265 aa).

Met43 serves as a coordination point for substrate. Residues Arg119 and Ser165 each contribute to the ATP site. Ala192 lines the substrate pocket.

It belongs to the Thz kinase family. Mg(2+) serves as cofactor.

It carries out the reaction 5-(2-hydroxyethyl)-4-methylthiazole + ATP = 4-methyl-5-(2-phosphooxyethyl)-thiazole + ADP + H(+). Its pathway is cofactor biosynthesis; thiamine diphosphate biosynthesis; 4-methyl-5-(2-phosphoethyl)-thiazole from 5-(2-hydroxyethyl)-4-methylthiazole: step 1/1. In terms of biological role, catalyzes the phosphorylation of the hydroxyl group of 4-methyl-5-beta-hydroxyethylthiazole (THZ). The chain is Hydroxyethylthiazole kinase from Haemophilus influenzae (strain ATCC 51907 / DSM 11121 / KW20 / Rd).